The chain runs to 72 residues: Protein SlyX homolog (72 aa).

This sequence belongs to the SlyX family.

The protein is Protein SlyX homolog of Bradyrhizobium diazoefficiens (strain JCM 10833 / BCRC 13528 / IAM 13628 / NBRC 14792 / USDA 110).